Reading from the N-terminus, the 201-residue chain is Dephospho-CoA kinase (201 aa).

In terms of domain architecture, DPCK spans 4-201 (AFFVTASIAC…VIQEISKGNM (198 aa)). 12–17 (ACGKST) contacts ATP.

It belongs to the CoaE family.

The protein resides in the cytoplasm. It catalyses the reaction 3'-dephospho-CoA + ATP = ADP + CoA + H(+). Its pathway is cofactor biosynthesis; coenzyme A biosynthesis; CoA from (R)-pantothenate: step 5/5. Functionally, catalyzes the phosphorylation of the 3'-hydroxyl group of dephosphocoenzyme A to form coenzyme A. The chain is Dephospho-CoA kinase from Campylobacter jejuni subsp. jejuni serotype O:2 (strain ATCC 700819 / NCTC 11168).